Consider the following 350-residue polypeptide: Geranylgeranyl diphosphate synthase (350 aa).

Lysine 70, arginine 73, and histidine 102 together coordinate isopentenyl diphosphate. Aspartate 109 and aspartate 113 together coordinate Mg(2+). Residues 109–113 (DDVMD) carry the DDXXD motif motif. Residue arginine 119 coordinates isopentenyl diphosphate. The DDXXD motif signature appears at 240 to 244 (DDLIG).

Belongs to the FPP/GGPP synthase family. The cofactor is Mg(2+).

The catalysed reaction is isopentenyl diphosphate + (2E,6E)-farnesyl diphosphate = (2E,6E,10E)-geranylgeranyl diphosphate + diphosphate. It participates in isoprenoid biosynthesis; geranylgeranyl diphosphate biosynthesis; geranylgeranyl diphosphate from farnesyl diphosphate and isopentenyl diphosphate: step 1/1. Catalyzes the condensation of isopentenyl pyrophosphate (IPP) with (2E,6E)-farnesyl diphosphate (E,E-FPP) to yield geranylgeranyl diphosphate (GGPP). The chain is Geranylgeranyl diphosphate synthase from Mycobacterium tuberculosis (strain ATCC 25618 / H37Rv).